We begin with the raw amino-acid sequence, 171 residues long: UPF0312 protein SAV2687 (171 aa).

The protein belongs to the UPF0312 family.

This is UPF0312 protein SAV2687 from Staphylococcus aureus (strain Mu50 / ATCC 700699).